Here is a 193-residue protein sequence, read N- to C-terminus: CASP-like protein 2D1 (193 aa).

A disordered region spans residues 1 to 24; that stretch reads MRANNNNTREEERSSSSKQQQPQA. Residues 1–29 lie on the Cytoplasmic side of the membrane; the sequence is MRANNNNTREEERSSSSKQQQPQAHMSLK. A helical transmembrane segment spans residues 30 to 50; it reads IIDSCLRLSVVPLSVATIWLT. The Extracellular portion of the chain corresponds to 51–73; that stretch reads VTNHESNPDYGNLDYNSIMGLKY. The helical transmembrane segment at 74–94 threads the bilayer; that stretch reads MVGVSAISAIYALLSTISLWV. Residues 95–109 lie on the Cytoplasmic side of the membrane; that stretch reads TCLVSKAWLFFVPDQ. A helical transmembrane segment spans residues 110–132; sequence VLAYVMTTSVAGATEIVYLLNKG. The Extracellular portion of the chain corresponds to 133-151; it reads DKIVTWSEMCSSYPHYCSK. The helical transmembrane segment at 152-172 threads the bilayer; it reads LTIALGLHVFVLFFFLFLSVI. Over 173-193 the chain is Cytoplasmic; it reads SAYRAFSPFDPPCDSQTNIDA.

This sequence belongs to the Casparian strip membrane proteins (CASP) family. Homodimer and heterodimers.

The protein localises to the cell membrane. This chain is CASP-like protein 2D1, found in Arabidopsis lyrata subsp. lyrata (Lyre-leaved rock-cress).